Here is a 154-residue protein sequence, read N- to C-terminus: 6,7-dimethyl-8-ribityllumazine synthase (154 aa).

5-amino-6-(D-ribitylamino)uracil-binding positions include phenylalanine 22, 56 to 58, and 80 to 82; these read AFE and AVI. A (2S)-2-hydroxy-3-oxobutyl phosphate-binding site is contributed by 85–86; it reads ET. Catalysis depends on histidine 88, which acts as the Proton donor. Residue phenylalanine 113 coordinates 5-amino-6-(D-ribitylamino)uracil. Arginine 127 is a binding site for (2S)-2-hydroxy-3-oxobutyl phosphate.

Belongs to the DMRL synthase family.

It catalyses the reaction (2S)-2-hydroxy-3-oxobutyl phosphate + 5-amino-6-(D-ribitylamino)uracil = 6,7-dimethyl-8-(1-D-ribityl)lumazine + phosphate + 2 H2O + H(+). It functions in the pathway cofactor biosynthesis; riboflavin biosynthesis; riboflavin from 2-hydroxy-3-oxobutyl phosphate and 5-amino-6-(D-ribitylamino)uracil: step 1/2. Functionally, catalyzes the formation of 6,7-dimethyl-8-ribityllumazine by condensation of 5-amino-6-(D-ribitylamino)uracil with 3,4-dihydroxy-2-butanone 4-phosphate. This is the penultimate step in the biosynthesis of riboflavin. The protein is 6,7-dimethyl-8-ribityllumazine synthase of Thermoanaerobacter sp. (strain X514).